Reading from the N-terminus, the 424-residue chain is DNA repair protein Rad60 (424 aa).

Tyr26 is modified (phosphotyrosine). 2 positions are modified to phosphoserine: Ser32 and Ser34. A disordered region spans residues Leu45–Ser177. A compositionally biased stretch (basic residues) spans Lys48–Asn57. Positions Gln77–Arg93 are enriched in basic and acidic residues. Ser96 is modified (phosphoserine). The span at Glu104–Asp123 shows a compositional bias: basic and acidic residues. Positions Lys156–Thr166 are enriched in basic residues. The segment covering Ser167–Ser177 has biased composition (low complexity).

Forms a complex with dgrn; likely required for localization to the nuclear periphery. Interacts with the SMC5-SMC6 complex members SMC5 and SMC6/jnj following ionizing radiation (IR) to induce DNA damage. Interaction between the SMC5-SMC6 complex and the dgrn-Rad60 complex, may stabilize the association of heterochromatic DSBs with the nuclear periphery.

It localises to the nucleus. The protein resides in the nucleoplasm. In terms of biological role, required for repair of DNA double strand breaks which occur during replication or are induced by ionizing radiation (IR). Functions with dgrn and downstream of the SMC5-SMC6 complex to regulate strand break repair. Likely functions by stabilizing the association of heterochromatic double strand breaks (DSBs) with the nuclear periphery as part of the homologous recombination (HR) repair process. This is DNA repair protein Rad60 from Drosophila melanogaster (Fruit fly).